A 150-amino-acid polypeptide reads, in one-letter code: Ribosome maturation factor RimP (150 aa).

This sequence belongs to the RimP family.

It is found in the cytoplasm. Required for maturation of 30S ribosomal subunits. In Thermotoga petrophila (strain ATCC BAA-488 / DSM 13995 / JCM 10881 / RKU-1), this protein is Ribosome maturation factor RimP.